A 4561-amino-acid polypeptide reads, in one-letter code: StAR-related lipid transfer protein 9 (4561 aa).

In terms of domain architecture, Kinesin motor spans 3–384 (NVQVAVRVRP…MRYASNAKNI (382 aa)). 103–110 (GQTGSGKT) provides a ligand contact to ATP. Over residues 307–321 (SSGGDSGVPSTTSGA) the composition is skewed to low complexity. Residues 307-330 (SSGGDSGVPSTTSGASSGGGPARR) form a disordered region. The FHA domain maps to 482 to 533 (TKIGRIDSDQEQDIVLQGQWIERDHCTITSTCGVVILRPTQGARCTVNGREV). 3 disordered regions span residues 784-805 (SRAP…RRSR), 873-1064 (SRWR…DTES), and 1092-1153 (WNLP…PSDS). Polar residues-rich tracts occupy residues 789-805 (WASS…RRSR), 884-903 (ASTQ…SQEI), 911-920 (CQMSSQGQST), and 939-948 (RWASVNTKTG). Basic and acidic residues-rich tracts occupy residues 1046-1060 (RPIK…RDLS) and 1124-1135 (SRGEYSMKDHGH). A Phosphoserine modification is found at Ser-1164. Disordered stretches follow at residues 1288–1392 (PSGD…SDMS), 1700–1767 (REAW…EEEN), 1959–1980 (ECKA…EEKQ), 2077–2120 (TNAT…ADRL), 2320–2356 (LATG…LGGS), 2384–2427 (VSTS…SSLD), 2439–2467 (FLLQ…LPNS), 2622–2656 (KPRQ…DPLP), 2712–2735 (KDSI…SEKI), 2777–2800 (TGLE…GNVG), 3002–3067 (RSVE…PGTL), 3185–3207 (AQTE…REQL), 3246–3286 (ELNL…TSLK), 3645–3703 (EGAA…LRPE), 3790–3847 (SDLA…PQQS), and 3863–3913 (QPKT…GRTT). Residues 1300 to 1321 (DIHEIQPHDEKPKHWLSIEEPK) show a composition bias toward basic and acidic residues. Composition is skewed to polar residues over residues 1328 to 1360 (LPQS…SQGL) and 1722 to 1741 (PKLS…TTTK). Composition is skewed to basic and acidic residues over residues 1754–1767 (ELGK…EEEN) and 1970–1980 (QSKEEPLEEKQ). The span at 2077 to 2091 (TNATSNNNTQIQKLT) shows a compositional bias: polar residues. The span at 2096–2110 (RSREYVQTRESESEH) shows a compositional bias: basic and acidic residues. 2 stretches are compositionally biased toward polar residues: residues 2333–2351 (TRSS…TTHT) and 2399–2408 (TSTGSTTQEA). A coiled-coil region spans residues 2414–2463 (EATVQKERKNSSLDRISRQAEKRVSFLLQEDSNQGEEERQKAEETSEDQQ). The segment covering 2417 to 2427 (VQKERKNSSLD) has biased composition (basic and acidic residues). A compositionally biased stretch (basic and acidic residues) spans 2634 to 2647 (DSSEVIEKRKEASR). 2 stretches are compositionally biased toward polar residues: residues 3039 to 3054 (LKNN…SQTM) and 3187 to 3199 (TEPS…THSQ). The segment covering 3689-3700 (PASPDGSPPPSL) has biased composition (pro residues). A compositionally biased stretch (basic and acidic residues) spans 3812–3835 (DSQRAESLDREGKSPLGKSSERLL). The span at 3863–3874 (QPKTTTGDQSKL) shows a compositional bias: polar residues. Residues 4185–4224 (SDIELMLQEYRRAREEAKVEIAQARDRLKERTEQEKMRIR) adopt a coiled-coil conformation. The 218-residue stretch at 4344-4561 (PYQDLAKHIV…VAKLASFLRS (218 aa)) folds into the START domain.

The protein belongs to the TRAFAC class myosin-kinesin ATPase superfamily. Kinesin family. Interacts with ATAD3A.

The protein resides in the cytoplasm. It is found in the cytoskeleton. Its subcellular location is the microtubule organizing center. It localises to the centrosome. The protein localises to the centriole. The protein resides in the nucleus. Its function is as follows. Microtubule-dependent motor protein required for spindle pole assembly during mitosis. Required to stabilize the pericentriolar material (PCM). This Mus musculus (Mouse) protein is StAR-related lipid transfer protein 9 (Stard9).